The chain runs to 143 residues: Antitumor antibiotic C-1027 apoprotein (143 aa).

An N-terminal signal peptide occupies residues 1 to 33 (MSLRHMSRRASRFGVVAVASIGLAAAAQSVAFA). Intrachain disulfides connect cysteine 69/cysteine 78 and cysteine 119/cysteine 124.

Belongs to the neocarzinostatin family.

Functionally, binds non-covalently to a chromophore which is the cytotoxic and mutagenic component of the antibiotic. The chromophore binds to DNA as a weak intercalator and causes single- and double-strand breaks. This is Antitumor antibiotic C-1027 apoprotein (cagA) from Streptomyces globisporus.